The following is a 473-amino-acid chain: FAD-dependent urate hydroxylase (473 aa).

It belongs to the HpyO family. Homodimer. It depends on FAD as a cofactor.

It catalyses the reaction urate + NADH + O2 + H(+) = 5-hydroxyisourate + NAD(+) + H2O. The catalysed reaction is urate + NADPH + O2 + H(+) = 5-hydroxyisourate + NADP(+) + H2O. It functions in the pathway purine metabolism; urate degradation. In terms of biological role, catalyzes the hydroxylation of urate to 5-hydroxyisourate (HIU). Is likely to be involved in the urate degradation pathway to allantoin. Is slightly more efficient (about 2.6 times) with NADPH than NADH as the electron donor. This chain is FAD-dependent urate hydroxylase, found in Xanthomonas campestris pv. campestris (strain ATCC 33913 / DSM 3586 / NCPPB 528 / LMG 568 / P 25).